Here is a 231-residue protein sequence, read N- to C-terminus: Probable glutathione S-transferase GSTU1 (231 aa).

Positions 5–84 constitute a GST N-terminal domain; it reads KELVLLDFWV…YLDDAFPGTP (80 aa). Glutathione is bound by residues Ser-15, Lys-42, Ile-56, and 68 to 69; that span reads ES. Residues 97 to 220 enclose the GST C-terminal domain; that stretch reads AAYARATARF…LPSPEKVYDF (124 aa).

The protein belongs to the GST superfamily. Tau family.

It catalyses the reaction RX + glutathione = an S-substituted glutathione + a halide anion + H(+). Its function is as follows. Conjugation of reduced glutathione to a wide number of exogenous and endogenous hydrophobic electrophiles. The sequence is that of Probable glutathione S-transferase GSTU1 (GSTU1) from Oryza sativa subsp. japonica (Rice).